The chain runs to 402 residues: Mitochondrial inner membrane protein OXA1 (402 aa).

The N-terminal 42 residues, 1-42 (MFKLTSRLVTSRFAASSRLATARTIVLPRPHPSWISFQAKRF), are a transit peptide targeting the mitochondrion. The Mitochondrial intermembrane portion of the chain corresponds to 43–118 (NSTGPNANDV…PSDIIQHVLE (76 aa)). A helical membrane pass occupies residues 119 to 139 (AVHVYSGLPWWGTIAATTILI). Over 140–199 (RCLMFPLYVKSSDTVARNSHIKPELDALNNKLMSTTDLQQGQLVAMQRKKLLSSHGIKNR) the chain is Mitochondrial matrix. The chain crosses the membrane as a helical span at residues 200–220 (WLAAPMLQIPIALGFFNALRH). Topologically, residues 221 to 239 (MANYPVDGFANQGVAWFTD) are mitochondrial intermembrane. A helical transmembrane segment spans residues 240–260 (LTQADPYLGLQVITAAVFISF). Over 261–275 (TRLGGETGAQQFSSP) the chain is Mitochondrial matrix. A helical transmembrane segment spans residues 276 to 292 (MKRLFTILPIISIPATM). Topologically, residues 293 to 297 (NLSSA) are mitochondrial intermembrane. A helical membrane pass occupies residues 298-316 (VVLYFAFNGAFSVLQTMIL). Residues 317 to 402 (RNKWVRSKLK…HKSNFINNKK (86 aa)) lie on the Mitochondrial matrix side of the membrane. The span at 366 to 385 (RQLMQDNEKKLQESFKEKRQ) shows a compositional bias: basic and acidic residues. The tract at residues 366–386 (RQLMQDNEKKLQESFKEKRQN) is disordered.

Belongs to the OXA1/ALB3/YidC family. As to quaternary structure, interacts with the large ribosome subunit of mitochondrial ribosome. Interacts directly with MRP20. Interacts with OXA1.

Its subcellular location is the mitochondrion inner membrane. Its function is as follows. Mitochondrial inner membrane insertase that mediates the insertion of both mitochondrion-encoded precursors and nuclear-encoded proteins from the matrix into the inner membrane. Links mitoribosomes with the inner membrane. Forms pores capable of accommodating translocating protein segments. Essential for the activity and assembly of cytochrome c oxidase. Plays a central role in the translocation and export of the N-terminal part of the COX2 protein into the mitochondrial intermembrane space. The sequence is that of Mitochondrial inner membrane protein OXA1 from Saccharomyces cerevisiae (strain ATCC 204508 / S288c) (Baker's yeast).